Reading from the N-terminus, the 89-residue chain is Cell division topological specificity factor (89 aa).

Belongs to the MinE family.

Its function is as follows. Prevents the cell division inhibition by proteins MinC and MinD at internal division sites while permitting inhibition at polar sites. This ensures cell division at the proper site by restricting the formation of a division septum at the midpoint of the long axis of the cell. The sequence is that of Cell division topological specificity factor from Laribacter hongkongensis (strain HLHK9).